The sequence spans 442 residues: Terpene cyclase aneC (442 aa).

Asp196, Asn327, Ser331, and Glu335 together coordinate Mg(2+). Residues Arg419 and Tyr420 each contribute to the (2E,6E)-farnesyl diphosphate site.

This sequence belongs to the terpene synthase family. Homodimer. The cofactor is Mg(2+).

It carries out the reaction (2E,6E)-farnesyl diphosphate = dauca-4,7-diene + diphosphate. It functions in the pathway secondary metabolite biosynthesis. Its function is as follows. Terpene cyclase; part of the gene cluster that mediates the biosynthesis of aculenes, a unique type of norsesquiterpenes that contain a nordaucane skeleton linked to an L-proline moiety and are of mixed biosynthetic origin. The pathway begins with the synthesis of dauca-4,7-diene by the terpene cyclase aneC using farnesyl pyrophosphate (FPP) as substrate. The cytochrome P450 monooxygenase aneF then performs the initial oxidation at C-12 of dauca-4,7-diene to yield asperaculane D. Asperaculane D is substrate of the cytochrome P450 monooxygenase aneD for C-10 hydroxylation to yield asperaculane E. The cytochrome P450 monooxygenase aneG then converts asperaculane E into aculene D via C-2 oxidation. The monomodular nonribosomal peptide synthtase aneB adenylates L-proline and the thiohydrolase aneE transfers this activated L-proline derivative to aculenes D and C to produce respectively aculenes B and A. The dioxygenase aneA converts aculene D into aculene C, and aculene B into aculene A by introducing the 5,6-alkene moiety. Asperculanes A, B, C and F, as well as 14-prolyl asperculane C, might be shunt products of the pathway. This is Terpene cyclase aneC from Aspergillus aculeatus (strain ATCC 16872 / CBS 172.66 / WB 5094).